Reading from the N-terminus, the 241-residue chain is Triosephosphate isomerase (241 aa).

9 to 11 (NWK) contacts substrate. Catalysis depends on His-96, which acts as the Electrophile. Glu-165 functions as the Proton acceptor in the catalytic mechanism. Residues Gly-171, Ser-204, and 225-226 (GG) each bind substrate.

It belongs to the triosephosphate isomerase family. In terms of assembly, homodimer.

It localises to the cytoplasm. The catalysed reaction is D-glyceraldehyde 3-phosphate = dihydroxyacetone phosphate. The protein operates within carbohydrate biosynthesis; gluconeogenesis. It participates in carbohydrate degradation; glycolysis; D-glyceraldehyde 3-phosphate from glycerone phosphate: step 1/1. Its function is as follows. Involved in the gluconeogenesis. Catalyzes stereospecifically the conversion of dihydroxyacetone phosphate (DHAP) to D-glyceraldehyde-3-phosphate (G3P). This is Triosephosphate isomerase from Prochlorococcus marinus (strain MIT 9515).